The chain runs to 523 residues: Putative F-box protein At1g30925 (523 aa).

An F-box domain is found at 4–44 (FPNDDLVYEILLRLPAKSVARCSCVSKLRRSILSRQDFTEL).

The protein is Putative F-box protein At1g30925 of Arabidopsis thaliana (Mouse-ear cress).